Here is a 149-residue protein sequence, read N- to C-terminus: Transcriptional repressor NrdR (149 aa).

The segment at 3 to 34 is a zinc-finger region; it reads CPFCAMEETKVIDSRLVSDGYQVRRRRECGYC. An ATP-cone domain is found at 49–139; sequence PKIIKNDGSR…VYLSFDDINQ (91 aa).

It belongs to the NrdR family. Zn(2+) serves as cofactor.

Negatively regulates transcription of bacterial ribonucleotide reductase nrd genes and operons by binding to NrdR-boxes. This chain is Transcriptional repressor NrdR, found in Histophilus somni (strain 129Pt) (Haemophilus somnus).